The chain runs to 689 residues: Methionine--tRNA ligase (689 aa).

The short motif at 15–25 (PYANGPIHLGH) is the 'HIGH' region element. Zn(2+)-binding residues include cysteine 146, cysteine 149, cysteine 159, and cysteine 162. The 'KMSKS' region signature appears at 332–336 (KMSKS). Lysine 335 contributes to the ATP binding site. Positions 554-574 (DAPKTAAPEKTAEASSVSSEP) are disordered. The tRNA-binding domain occupies 588 to 689 (DFAKIDLRIA…EGAQPGMRVK (102 aa)).

This sequence belongs to the class-I aminoacyl-tRNA synthetase family. MetG type 1 subfamily. In terms of assembly, homodimer. The cofactor is Zn(2+).

The protein resides in the cytoplasm. It catalyses the reaction tRNA(Met) + L-methionine + ATP = L-methionyl-tRNA(Met) + AMP + diphosphate. Functionally, is required not only for elongation of protein synthesis but also for the initiation of all mRNA translation through initiator tRNA(fMet) aminoacylation. The protein is Methionine--tRNA ligase of Shewanella baltica (strain OS185).